We begin with the raw amino-acid sequence, 424 residues long: Glutamyl-tRNA reductase (424 aa).

Substrate contacts are provided by residues 53–56 (TCNR), S111, 116–118 (EPQ), and Q122. The active-site Nucleophile is the C54. 191 to 196 (GAGEMI) serves as a coordination point for NADP(+).

This sequence belongs to the glutamyl-tRNA reductase family. As to quaternary structure, homodimer.

The enzyme catalyses (S)-4-amino-5-oxopentanoate + tRNA(Glu) + NADP(+) = L-glutamyl-tRNA(Glu) + NADPH + H(+). The protein operates within porphyrin-containing compound metabolism; protoporphyrin-IX biosynthesis; 5-aminolevulinate from L-glutamyl-tRNA(Glu): step 1/2. In terms of biological role, catalyzes the NADPH-dependent reduction of glutamyl-tRNA(Glu) to glutamate 1-semialdehyde (GSA). This chain is Glutamyl-tRNA reductase, found in Bordetella avium (strain 197N).